The chain runs to 392 residues: 8-amino-7-oxononanoate synthase (392 aa).

Residue arginine 26 participates in substrate binding. 113-114 (GY) is a binding site for pyridoxal 5'-phosphate. A substrate-binding site is contributed by histidine 138. The pyridoxal 5'-phosphate site is built by serine 186, histidine 214, and threonine 241. The residue at position 244 (lysine 244) is an N6-(pyridoxal phosphate)lysine. Threonine 353 provides a ligand contact to substrate.

Belongs to the class-II pyridoxal-phosphate-dependent aminotransferase family. BioF subfamily. Homodimer. Requires pyridoxal 5'-phosphate as cofactor.

The catalysed reaction is 6-carboxyhexanoyl-[ACP] + L-alanine + H(+) = (8S)-8-amino-7-oxononanoate + holo-[ACP] + CO2. It participates in cofactor biosynthesis; biotin biosynthesis. Catalyzes the decarboxylative condensation of pimeloyl-[acyl-carrier protein] and L-alanine to produce 8-amino-7-oxononanoate (AON), [acyl-carrier protein], and carbon dioxide. The chain is 8-amino-7-oxononanoate synthase from Maricaulis maris (strain MCS10) (Caulobacter maris).